Reading from the N-terminus, the 81-residue chain is uncharacterized protein (81 aa).

This is an uncharacterized protein from Bacillus anthracis.